A 59-amino-acid chain; its full sequence is Cecropin-A1 (59 aa).

The signal sequence occupies residues 1–23; that stretch reads MNFTKLFAIVLLAALVLLGQTEA.

This sequence belongs to the cecropin family.

The protein resides in the secreted. Its function is as follows. Cecropins have lytic and antibacterial activity against several Gram-positive and Gram-negative bacteria. This Aedes albopictus (Asian tiger mosquito) protein is Cecropin-A1 (CECA1).